Reading from the N-terminus, the 501-residue chain is Ribose import ATP-binding protein RbsA (501 aa).

ABC transporter domains are found at residues 6 to 242 and 253 to 495; these read LQLS…VGRK and VHGQ…VGKK. Residue 38–45 participates in ATP binding; sequence GENGAGKS.

Belongs to the ABC transporter superfamily. Ribose importer (TC 3.A.1.2.1) family. In terms of assembly, the complex is composed of an ATP-binding protein (RbsA), two transmembrane proteins (RbsC) and a solute-binding protein (RbsB).

It is found in the cell inner membrane. It catalyses the reaction D-ribose(out) + ATP + H2O = D-ribose(in) + ADP + phosphate + H(+). Its function is as follows. Part of the ABC transporter complex RbsABC involved in ribose import. Responsible for energy coupling to the transport system. In Vibrio vulnificus (strain CMCP6), this protein is Ribose import ATP-binding protein RbsA.